A 589-amino-acid polypeptide reads, in one-letter code: Transcription factor atf-6 homolog (589 aa).

Basic and acidic residues predominate over residues 1–16 (MNFDNTVHESNFDDLL). The tract at residues 1–82 (MNFDNTVHES…SSPPLSCANF (82 aa)) is disordered. Composition is skewed to low complexity over residues 36–54 (GTDE…FSDQ) and 67–78 (GDSSSDSSPPLS). Residues 250–299 (QNRKIRNRMYAQASRMRKKEADEHMKMNLQELLQENEILRTENAALKQRL) enclose the bZIP domain. The tract at residues 252 to 275 (RKIRNRMYAQASRMRKKEADEHMK) is basic motif. The stretch at 271-305 (DEHMKMNLQELLQENEILRTENAALKQRLAFFEHE) forms a coiled coil. The interval 281-295 (LLQENEILRTENAAL) is leucine-zipper. Residues 324–344 (IIAAGSVLMMFGLFAVISPFN) form a helical membrane-spanning segment.

This sequence belongs to the bZIP family. ATF subfamily.

The protein localises to the nucleus. The protein resides in the membrane. Transcription factor. Plays a role in the unfolded protein response (UPR), perhaps mainly during constitutive endoplasmic reticulum (ER) stress, by activating transcription of genes involved in the UPR. Plays a role in modulating lifespan, acting by positively regulating expression of calcium-binding chaperone crt-1, thereby influencing ER calcium homeostasis. By activating the UPR pathway, confers adaptive protection to subsequent exposure to hypoxia. Involved in protection against proteotoxicity, probably acting via the UPR. Probably acts in the UPR in parallel with the ire-1-xbp-1 and pek-1 pathways. May be regulated by endopeptidase S2P-mediated proteolytic cleavage. The sequence is that of Transcription factor atf-6 homolog from Caenorhabditis elegans.